We begin with the raw amino-acid sequence, 44 residues long: ADCSATGDTCDHTKKCCDDCYTCRCGTPWGANCRCDYYKARCDT.

Disulfide bonds link Cys-3–Cys-17, Cys-10–Cys-23, Cys-16–Cys-35, Cys-20–Cys-42, and Cys-25–Cys-33. At Thr-44 the chain carries Threonine amide. The O-palmitoyl threonine moiety is linked to residue Thr-44.

Belongs to the neurotoxin 02 (plectoxin) family. 02 (plectoxin) subfamily. In terms of processing, contains 5 disulfide bonds. Acylation by palmitate is required for biological activity. In terms of tissue distribution, expressed by the venom gland.

It localises to the secreted. In terms of biological role, toxin that inhibits presynaptic voltage-gated calcium channel (Cav) in Drosophila nerve terminals, most likely through specific block of the Cav2 channel (known as Dmca1A). This chain is Omega-plectoxin-Pt1a, found in Plectreurys tristis (Spider).